A 131-amino-acid polypeptide reads, in one-letter code: MIYGIGTDIIHIPRIEQLINKYSTKFINRILGKNEITIYQSLSIKQQTNFVAKRFAGKESVAKAIGTGITSSLLLPDIEILNNNLGKPIVYIPNAAKILLNNKKLTEYKIDISLSDDHPLAIAFTVISAST.

Mg(2+)-binding residues include Asp8 and Glu59.

Belongs to the P-Pant transferase superfamily. AcpS family. It depends on Mg(2+) as a cofactor.

It is found in the cytoplasm. It carries out the reaction apo-[ACP] + CoA = holo-[ACP] + adenosine 3',5'-bisphosphate + H(+). In terms of biological role, transfers the 4'-phosphopantetheine moiety from coenzyme A to a Ser of acyl-carrier-protein. This is Holo-[acyl-carrier-protein] synthase from Orientia tsutsugamushi (strain Boryong) (Rickettsia tsutsugamushi).